The following is a 217-amino-acid chain: Large ribosomal subunit protein uL1 (217 aa).

This sequence belongs to the universal ribosomal protein uL1 family.

This chain is Large ribosomal subunit protein uL1 (RPL10A), found in Candida glabrata (strain ATCC 2001 / BCRC 20586 / JCM 3761 / NBRC 0622 / NRRL Y-65 / CBS 138) (Yeast).